The sequence spans 162 residues: Transcriptional repressor NrdR (162 aa).

Residues 3–34 (CPYCHHTDSRVLESRSAEGGQSIRRRRECLAC) fold into a zinc finger. Positions 49–139 (ITVIKRNGDR…VYRQFQGISD (91 aa)) constitute an ATP-cone domain.

The protein belongs to the NrdR family. It depends on Zn(2+) as a cofactor.

In terms of biological role, negatively regulates transcription of bacterial ribonucleotide reductase nrd genes and operons by binding to NrdR-boxes. In Thermosynechococcus vestitus (strain NIES-2133 / IAM M-273 / BP-1), this protein is Transcriptional repressor NrdR.